We begin with the raw amino-acid sequence, 387 residues long: Chaperone protein DnaJ (387 aa).

In terms of domain architecture, J spans 6 to 70 (DYYEILGLSR…EKRAQYDRFG (65 aa)). The CR-type zinc-finger motif lies at 130-212 (GVRKDIDVPR…CSGTGRVRNT (83 aa)). Residues cysteine 143, cysteine 146, cysteine 160, cysteine 163, cysteine 186, cysteine 189, cysteine 200, and cysteine 203 each coordinate Zn(2+). CXXCXGXG motif repeat units lie at residues 143–150 (CSNCSGTG), 160–167 (CPTCGGTG), 186–193 (CSTCRGKG), and 200–207 (CPVCSGTG). Positions 143 to 162 (CSNCSGTGARPGTSPKRCPT) are disordered.

It belongs to the DnaJ family. In terms of assembly, homodimer. Requires Zn(2+) as cofactor.

It localises to the cytoplasm. Functionally, participates actively in the response to hyperosmotic and heat shock by preventing the aggregation of stress-denatured proteins and by disaggregating proteins, also in an autonomous, DnaK-independent fashion. Unfolded proteins bind initially to DnaJ; upon interaction with the DnaJ-bound protein, DnaK hydrolyzes its bound ATP, resulting in the formation of a stable complex. GrpE releases ADP from DnaK; ATP binding to DnaK triggers the release of the substrate protein, thus completing the reaction cycle. Several rounds of ATP-dependent interactions between DnaJ, DnaK and GrpE are required for fully efficient folding. Also involved, together with DnaK and GrpE, in the DNA replication of plasmids through activation of initiation proteins. This chain is Chaperone protein DnaJ, found in Methanosarcina thermophila.